Reading from the N-terminus, the 151-residue chain is Trivalent organoarsenical cleaving enzyme (151 aa).

In terms of domain architecture, VOC spans Ser-2–Val-118. Gln-5 lines the Fe(2+) pocket. Roxarsone (III) is bound at residue Asp-61. His-62 lines the Fe(2+) pocket. Roxarsone (III) is bound by residues Cys-95 and Cys-96. Fe(2+) is bound at residue Glu-114.

Monomer. The cofactor is Fe(2+).

The enzyme catalyses methylarsonous acid + AH2 + O2 = arsenite + methanol + A + H(+). It carries out the reaction roxarsone (III) + AH2 + O2 = 4-hydroxy-3-nitrocyclohexa-2,5-dien-1-one + arsenite + A + H(+). It catalyses the reaction nitarsone (III) + AH2 + O2 = 4-nitrocyclohexa-2,5-dien-1-one + arsenite + A + H(+). The catalysed reaction is 4-aminophenylarsonous acid + AH2 + O2 = 4-aminocyclohexa-2,5-dien-1-one + arsenite + A. Its function is as follows. Nonheme iron-dependent dioxygenase that can break carbon-arsenic bonds, playing a role in the detoxification of environmental organoarsenical compounds. Catalyzes the oxygen-dependent demethylation of highly toxic methylarsonous acid (MAs(III)) to arsenite, which can then be exported out of the cell. Can also cleave the C-As bond in several trivalent aromatic arsenicals, including roxarsone (III), nitarsone (III) and (4-aminophenyl)arsonous acid. Organoarsenical degradation by this enzyme is proposed to have a significant impact on the arsenic biogeocycle that maintains a balance between organic and inorganic species. This chain is Trivalent organoarsenical cleaving enzyme, found in Thermomonospora curvata (strain ATCC 19995 / DSM 43183 / JCM 3096 / KCTC 9072 / NBRC 15933 / NCIMB 10081 / Henssen B9).